Reading from the N-terminus, the 712-residue chain is Nucleolin (712 aa).

Positions 1-305 (MVKLAKAGKN…KKQKVEGTEP (305 aa)) are disordered. Lys9, Lys15, and Lys16 each carry N6-acetyllysine. Residues 24 to 43 (VEEDSEDEEMSEDEEDDSSG) are compositionally biased toward acidic residues. Phosphoserine occurs at positions 28, 34, 41, and 42. Residues 56 to 107 (AAATSAKKVVVSPTKKVAVATPAKKAAVTPGKKAAATPAKKTVTPAKAVTTP) are compositionally biased toward low complexity. Residues 58–65 (ATSAKKVV) form repeat 1. The tract at residues 58-135 (ATSAKKVVVS…GAAIPAKGAK (78 aa)) is 8 X 8 AA tandem repeats of X-T-P-X-K-K-X-X. A Phosphoserine modification is found at Ser67. Phosphothreonine occurs at positions 69, 76, 84, and 92. Tandem repeats lie at residues 75–82 (ATPAKKAA), 83–90 (VTPGKKAA), and 91–98 (ATPAKKTV). Lys96 carries the N6-acetyllysine modification. Thr99 bears the Phosphothreonine mark. One copy of the 5; truncated repeat lies at 99-104 (TPAKAV). Lys102 bears the N6-acetyllysine mark. Repeat unit 6 spans residues 105–112 (TTPGKKGA). Thr106 carries the post-translational modification Phosphothreonine. Lys109 carries the N6-acetyllysine modification. Position 113 is a phosphothreonine (Thr113). At Lys116 the chain carries N6-acetyllysine. 2 consecutive repeat copies span residues 120–127 (ATPGKKGA) and 128–135 (AIPAKGAK). The residue at position 121 (Thr121) is a Phosphothreonine. The segment covering 122–137 (PGKKGAAIPAKGAKNG) has biased composition (low complexity). The residue at position 124 (Lys124) is an N6-acetyllysine. Ser145 and Ser153 each carry phosphoserine. A compositionally biased stretch (acidic residues) spans 145–171 (SDEEEEDDSEEDEDDDEDEDEDEDEIE). Positions 172–183 (PAAMKAAAAAPA) are enriched in low complexity. Residues Ser184 and Ser206 each carry the phosphoserine modification. Acidic residues predominate over residues 184-211 (SEDEDDEDDEDDEDEDDDEEDDSEEEAM). Thr214 bears the Phosphothreonine mark. Residues 234–274 (EDEDEEEDDEDEDDDDDDDDDDEDDEDEDDEEEEEEEEEEP) are compositionally biased toward acidic residues. A compositionally biased stretch (basic and acidic residues) spans 275–302 (VKEAPGKRKKEMAKQKAAPEAKKQKVEG). Lys299 is covalently cross-linked (Glycyl lysine isopeptide (Lys-Gly) (interchain with G-Cter in SUMO1); alternate). A Glycyl lysine isopeptide (Lys-Gly) (interchain with G-Cter in SUMO2); alternate cross-link involves residue Lys299. Position 303 is a phosphothreonine (Thr303). RRM domains lie at 309–385 (FNLF…KPKG) and 395–468 (RTLL…YTGE). Lys320 is subject to N6-acetyllysine. Lys326 is covalently cross-linked (Glycyl lysine isopeptide (Lys-Gly) (interchain with G-Cter in SUMO1); alternate). A Glycyl lysine isopeptide (Lys-Gly) (interchain with G-Cter in SUMO2); alternate cross-link involves residue Lys326. Lys350 carries the post-translational modification N6-acetyllysine. Phosphoserine is present on Ser358. Thr369 bears the Phosphothreonine mark. Lys372 participates in a covalent cross-link: Glycyl lysine isopeptide (Lys-Gly) (interchain with G-Cter in SUMO2). A Glycyl lysine isopeptide (Lys-Gly) (interchain with G-Cter in SUMO2); alternate cross-link involves residue Lys379. Lys379 carries the post-translational modification N6-acetyllysine; alternate. Lys400 and Lys405 each carry N6-acetyllysine. Position 407 is a phosphothreonine (Thr407). N6-acetyllysine occurs at positions 429 and 446. A phosphoserine mark is found at Ser460 and Ser462. Residues Lys469 and Lys479 each carry the N6-acetyllysine modification. Positions 488 to 562 (KTLVLSNLSY…RAIRLELQGP (75 aa)) constitute an RRM 3 domain. Lys515 is covalently cross-linked (Glycyl lysine isopeptide (Lys-Gly) (interchain with G-Cter in SUMO2); alternate). Lys515 carries the N6-acetyllysine; alternate modification. Lys523 is subject to N6-acetyllysine. Position 565 is a phosphoserine (Ser565). Position 574 is an N6-acetyllysine (Lys574). Positions 574 to 649 (KTLFVKGLSE…NKVTLDWAKP (76 aa)) constitute an RRM 4 domain. A Glycyl lysine isopeptide (Lys-Gly) (interchain with G-Cter in SUMO2); alternate cross-link involves residue Lys579. At Lys579 the chain carries N6-acetyllysine; alternate. A Phosphoserine modification is found at Ser582. Lys591 is covalently cross-linked (Glycyl lysine isopeptide (Lys-Gly) (interchain with G-Cter in SUMO1); alternate). Lys591 participates in a covalent cross-link: Glycyl lysine isopeptide (Lys-Gly) (interchain with G-Cter in SUMO2); alternate. Phosphoserine is present on residues Ser593 and Ser621. Residue Lys626 forms a Glycyl lysine isopeptide (Lys-Gly) (interchain with G-Cter in SUMO2) linkage. The disordered stretch occupies residues 642–712 (VTLDWAKPKG…KPQGKKTKFE (71 aa)). At Lys648 the chain carries N6-acetyllysine. The segment covering 652 to 698 (EGGFGGRGGGRGGFGGRGGGRGGRGGFGGRGRGGFGGRGGFRGGRGG) has biased composition (gly residues). Asymmetric dimethylarginine is present on residues Arg658, Arg662, Arg668, Arg672, Arg675, Arg681, Arg683, Arg689, and Arg693. The residue at position 696 (Arg696) is an Asymmetric dimethylarginine; alternate. At Arg696 the chain carries Omega-N-methylarginine; alternate. The segment covering 699–712 (GGDHKPQGKKTKFE) has biased composition (basic and acidic residues).

As to quaternary structure, identified in a IGF2BP1-dependent mRNP granule complex containing untranslated mRNAs. Component of the SWAP complex that consists of NPM1, NCL/nucleolin, PARP1 and SWAP70. Component of a complex which is at least composed of HTATSF1/Tat-SF1, the P-TEFb complex components CDK9 and CCNT1, RNA polymerase II, SUPT5H, and NCL/nucleolin. Interacts with AICDA. Interacts with APTX. Interacts with C1QBP. Interacts with ERBB4. Interacts (via C-terminus) with FMR1 isoform 6 (via N-terminus). Interacts with GZF1; this interaction is important for nucleolar localization of GZF1. Interacts with NSUN2. Interacts with NVL. Interacts (via N-terminus domain) with SETX. Interacts (via RRM1 and C-terminal RRM4/Arg/Gly-rich domains) with TERT; the interaction is important for nucleolar localization of TERT. Interacts with WDR46. Interacts with ZFP36. Interacts with LRRC34. Interacts with RRP1B. Interacts with HNRNPU; this interaction occurs during mitosis. Interacts with RIOK1; RIOK1 recruits NCL to the PRMT5 for symmetrically methylation. Interacts with ZBTB7B. Interacts with MDK; this interaction promotes NCL clustering and lateral movements of this complex into lipid rafts leading to MDK internalization. Interacts with HDGF. Interacts with ALKBH2. Interacts with IGFBP5; this interaction is necessary for IGFBP5 localization to the nucleus. Interacts with DDX24 (when ubiquitinated); this interaction may be important during ribosome biogenesis. In terms of processing, some glutamate residues are glycylated by TTLL8. This modification occurs exclusively on glutamate residues and results in a glycine chain on the gamma-carboxyl group. Post-translationally, symmetrically methylated by PRMT5.

The protein localises to the nucleus. Its subcellular location is the nucleolus. It is found in the cytoplasm. Its function is as follows. Nucleolin is the major nucleolar protein of growing eukaryotic cells. It is found associated with intranucleolar chromatin and pre-ribosomal particles. It induces chromatin decondensation by binding to histone H1. It is thought to play a role in pre-rRNA transcription and ribosome assembly. May play a role in the process of transcriptional elongation. Binds RNA oligonucleotides with 5'-UUAGGG-3' repeats more tightly than the telomeric single-stranded DNA 5'-TTAGGG-3' repeats. This chain is Nucleolin (NCL), found in Pongo abelii (Sumatran orangutan).